The following is a 337-amino-acid chain: tRNA N(3)-cytidine methyltransferase METTL2 (337 aa).

Positions 66, 70, 140, 165, 191, and 212 each coordinate S-adenosyl-L-methionine.

Belongs to the methyltransferase superfamily. METL family. As to quaternary structure, monomer.

Its subcellular location is the cytoplasm. It catalyses the reaction cytidine(32) in tRNA(Thr) + S-adenosyl-L-methionine = N(3)-methylcytidine(32) in tRNA(Thr) + S-adenosyl-L-homocysteine + H(+). The enzyme catalyses cytidine(32) in tRNA(Arg)(CCU) + S-adenosyl-L-methionine = N(3)-methylcytidine(32) in tRNA(Arg)(CCU) + S-adenosyl-L-homocysteine + H(+). S-adenosyl-L-methionine-dependent methyltransferase that mediates N(3)-methylcytidine modification of residue 32 of the tRNA anticodon loop of tRNA(Thr)(UGU) and tRNA(Arg)(CCU). N(3)-methylcytidine methylation by mettl2 requires the N6-threonylcarbamoylation of tRNA (t6A37) by the EKC/KEOPS complex as prerequisite. The sequence is that of tRNA N(3)-cytidine methyltransferase METTL2 (mettl2) from Xenopus tropicalis (Western clawed frog).